The chain runs to 93 residues: Acylphosphatase (93 aa).

A disulfide bridge connects residues cysteine 5 and cysteine 49. Positions 5–93 (CTIAWIYGRV…ETLTDFSIRY (89 aa)) constitute an Acylphosphatase-like domain. Catalysis depends on residues arginine 20 and asparagine 38.

It belongs to the acylphosphatase family.

The catalysed reaction is an acyl phosphate + H2O = a carboxylate + phosphate + H(+). The chain is Acylphosphatase from Salmonella arizonae (strain ATCC BAA-731 / CDC346-86 / RSK2980).